A 281-amino-acid polypeptide reads, in one-letter code: Pantothenate synthetase (281 aa).

30-37 (MGNLHAGH) lines the ATP pocket. The Proton donor role is filled by His37. Gln61 is a (R)-pantoate binding site. Gln61 is a beta-alanine binding site. Position 149 to 152 (149 to 152 (GRKD)) interacts with ATP. Position 155 (Gln155) interacts with (R)-pantoate. ATP-binding positions include Val178 and 186 to 189 (MSSR).

Belongs to the pantothenate synthetase family. In terms of assembly, homodimer.

Its subcellular location is the cytoplasm. The enzyme catalyses (R)-pantoate + beta-alanine + ATP = (R)-pantothenate + AMP + diphosphate + H(+). The protein operates within cofactor biosynthesis; (R)-pantothenate biosynthesis; (R)-pantothenate from (R)-pantoate and beta-alanine: step 1/1. Catalyzes the condensation of pantoate with beta-alanine in an ATP-dependent reaction via a pantoyl-adenylate intermediate. This chain is Pantothenate synthetase, found in Shewanella amazonensis (strain ATCC BAA-1098 / SB2B).